The primary structure comprises 799 residues: MPSQNYDLPQKKQEKMTKFQEAVTFKDVAVVFSREELRLLDLTQRKLYRDVMVENFKNLVAVGHLPFQPDMVSQLEAEEKLWMMETETQRSSKHQNKMETLQKFALKYLSNQELSCWQIWKQVASELTRCLQGKSSQLLQGDSIQVSENENNIMNPKGDSSIYIENQEFPFWRTQHSCGNTYLSESQIQSRGKQIDVKNNLQIHEDFMKKSPFHEHIKTDTEPKPCKGNEYGKIISDGSNQKLPLGEKPHPCGECGRGFSYSPRLPLHPNVHTGEKCFSQSSHLRTHQRIHPGEKLNRCHESGDCFNKSSFHSYQSNHTGEKSYRCDSCGKGFSSSTGLIIHYRTHTGEKPYKCEECGKCFSQSSNFQCHQRVHTEEKPYKCEECGKGFGWSVNLRVHQRVHRGEKPYKCEECGKGFTQAAHFHIHQRVHTGEKPYKCDVCGKGFSHNSPLICHRRVHTGEKPYKCEACGKGFTRNTDLHIHFRVHTGEKPYKCKECGKGFSQASNLQVHQNVHTGEKRFKCETCGKGFSQSSKLQTHQRVHTGEKPYRCDVCGKDFSYSSNLKLHQVIHTGEKPYKCEECGKGFSWRSNLHAHQRVHSGEKPYKCEQCDKSFSQAIDFRVHQRVHTGEKPYKCGVCGKGFSQSSGLQSHQRVHTGEKPYKCDVCGKGFRYSSQFIYHQRGHTGEKPYKCEECGKGFGRSLNLRHHQRVHTGEKPHICEECGKAFSLPSNLRVHLGVHTREKLFKCEECGKGFSQSARLEAHQRVHTGEKPYKCDICDKDFRHRSRLTYHQKVHTGKKL.

One can recognise a KRAB domain in the interval 23–94 (VTFKDVAVVF…ETETQRSSKH (72 aa)). 19 C2H2-type zinc fingers span residues 250–272 (HPCG…PNVH), 269–291 (PNVH…QRIH), 324–346 (YRCD…YRTH), 352–374 (YKCE…QRVH), 380–402 (YKCE…QRVH), 408–430 (YKCE…QRVH), 436–458 (YKCD…RRVH), 464–486 (YKCE…FRVH), 492–514 (YKCK…QNVH), 520–542 (FKCE…QRVH), 548–570 (YRCD…QVIH), 576–598 (YKCE…QRVH), 604–626 (YKCE…QRVH), 632–654 (YKCG…QRVH), 660–682 (YKCD…QRGH), 688–710 (YKCE…QRVH), 716–738 (HICE…LGVH), 744–766 (FKCE…QRVH), and 772–794 (YKCD…QKVH).

Belongs to the krueppel C2H2-type zinc-finger protein family.

The protein resides in the nucleus. In terms of biological role, may be involved in transcriptional regulation. The chain is Zinc finger protein 227 (ZNF227) from Homo sapiens (Human).